Here is a 310-residue protein sequence, read N- to C-terminus: Altered inheritance of mitochondria protein 46, mitochondrial (310 aa).

Residues 1–20 (MRLISKVLVKTNCLEVGMRR) constitute a mitochondrion transit peptide.

Belongs to the AIM18/AIM46 family.

The protein resides in the mitochondrion. The protein is Altered inheritance of mitochondria protein 46, mitochondrial (AIM46) of Saccharomyces cerevisiae (strain YJM789) (Baker's yeast).